The following is a 155-amino-acid chain: Ribosomal RNA large subunit methyltransferase H (155 aa).

S-adenosyl-L-methionine-binding positions include L72, G103, and 122–127 (LGRMVW).

This sequence belongs to the RNA methyltransferase RlmH family. In terms of assembly, homodimer.

The protein localises to the cytoplasm. The enzyme catalyses pseudouridine(1915) in 23S rRNA + S-adenosyl-L-methionine = N(3)-methylpseudouridine(1915) in 23S rRNA + S-adenosyl-L-homocysteine + H(+). Specifically methylates the pseudouridine at position 1915 (m3Psi1915) in 23S rRNA. In Cereibacter sphaeroides (strain ATCC 17029 / ATH 2.4.9) (Rhodobacter sphaeroides), this protein is Ribosomal RNA large subunit methyltransferase H.